A 141-amino-acid polypeptide reads, in one-letter code: Acetyltransferase ECA0875 (141 aa).

The region spanning 1 to 141 (MEIRIFRQDD…GKRLIEDREY (141 aa)) is the N-acetyltransferase domain.

This sequence belongs to the acetyltransferase family. YpeA subfamily.

In Pectobacterium atrosepticum (strain SCRI 1043 / ATCC BAA-672) (Erwinia carotovora subsp. atroseptica), this protein is Acetyltransferase ECA0875.